A 457-amino-acid chain; its full sequence is Argininosuccinate lyase (457 aa).

It belongs to the lyase 1 family. Argininosuccinate lyase subfamily.

Its subcellular location is the cytoplasm. The catalysed reaction is 2-(N(omega)-L-arginino)succinate = fumarate + L-arginine. It functions in the pathway amino-acid biosynthesis; L-arginine biosynthesis; L-arginine from L-ornithine and carbamoyl phosphate: step 3/3. This Aquifex aeolicus (strain VF5) protein is Argininosuccinate lyase.